The following is a 334-amino-acid chain: MNYIGSKLKLSNWLETEISNVAGHSLSDKVFCDLFAGTGIVGRKFKTNVKQVIANDMEYYSYVLNRNYIGNCQSILKAGELLQRLEQLPPREGLIYQHYCLGSGSERQYFSDENGKKIDAVRIQIEEWKNTRYIDEDTYYFLLATLLEGADKVANTASVYGAFLKNLKKSALKPLSLEPALFEIGSDGHQVYQADANQLIKNISGDILYLDPPYNARQYGANYHLLNSIALYDDFTPKGKTGLREYSRSKYCSKSDVVPVFEALIRDADFQYIFLSYNNEGLMSVGQVREIFERFGKYDLVQTEYRRFKADKTENRNHKANSTFEYLHILEKTF.

Belongs to the N(4)/N(6)-methyltransferase family.

It carries out the reaction a 2'-deoxyadenosine in DNA + S-adenosyl-L-methionine = an N(6)-methyl-2'-deoxyadenosine in DNA + S-adenosyl-L-homocysteine + H(+). Its function is as follows. A methylase, recognizes the double-stranded sequence 5'-CATG-3', methylates A-2 on both strands and protects the DNA from cleavage by the NlaIII endonuclease. This chain is Type II methyltransferase M.NlaIII (nlaIIIM), found in Neisseria lactamica.